A 338-amino-acid chain; its full sequence is Large ribosomal subunit protein uL10 (338 aa).

The segment covering 309-327 has biased composition (basic and acidic residues); that stretch reads KAEVEEAKEEEKEEKKEEA. The disordered stretch occupies residues 309–338; that stretch reads KAEVEEAKEEEKEEKKEEAAPAAAGLGLLF.

Belongs to the universal ribosomal protein uL10 family. Part of the 50S ribosomal subunit. Forms part of the ribosomal stalk which helps the ribosome interact with GTP-bound translation factors. Forms a heptameric L10(L12)2(L12)2(L12)2 complex, where L10 forms an elongated spine to which the L12 dimers bind in a sequential fashion.

Functionally, forms part of the ribosomal stalk, playing a central role in the interaction of the ribosome with GTP-bound translation factors. This chain is Large ribosomal subunit protein uL10, found in Methanothermococcus thermolithotrophicus (Methanococcus thermolithotrophicus).